The chain runs to 357 residues: Heat-inducible transcription repressor HrcA (357 aa).

This sequence belongs to the HrcA family.

In terms of biological role, negative regulator of class I heat shock genes (grpE-dnaK-dnaJ and groELS operons). Prevents heat-shock induction of these operons. The polypeptide is Heat-inducible transcription repressor HrcA (Anabaena sp. (strain L31)).